The sequence spans 75 residues: Exodeoxyribonuclease 7 small subunit (75 aa).

This sequence belongs to the XseB family. As to quaternary structure, heterooligomer composed of large and small subunits.

Its subcellular location is the cytoplasm. It catalyses the reaction Exonucleolytic cleavage in either 5'- to 3'- or 3'- to 5'-direction to yield nucleoside 5'-phosphates.. In terms of biological role, bidirectionally degrades single-stranded DNA into large acid-insoluble oligonucleotides, which are then degraded further into small acid-soluble oligonucleotides. The sequence is that of Exodeoxyribonuclease 7 small subunit from Listeria monocytogenes serotype 4b (strain CLIP80459).